A 234-amino-acid polypeptide reads, in one-letter code: Segregation and condensation protein A (234 aa).

The protein belongs to the ScpA family. Component of a cohesin-like complex composed of ScpA, ScpB and the Smc homodimer, in which ScpA and ScpB bind to the head domain of Smc. The presence of the three proteins is required for the association of the complex with DNA.

The protein resides in the cytoplasm. In terms of biological role, participates in chromosomal partition during cell division. May act via the formation of a condensin-like complex containing Smc and ScpB that pull DNA away from mid-cell into both cell halves. The chain is Segregation and condensation protein A from Streptococcus pyogenes serotype M6 (strain ATCC BAA-946 / MGAS10394).